Reading from the N-terminus, the 227-residue chain is ATP synthase F(0) complex subunit a (227 aa).

Helical transmembrane passes span 14 to 34 (FLGIPLIAIAILIPWMLFPSP), 69 to 89 (WAMILTALLLFLMTLNLLGLL), 98 to 118 (QLSMNMALAVPLWLATVLIGM), 139 to 159 (IPILIIIETISLFIRPLALGV), 165 to 185 (LTAGHLLIQLISTATFVMLSI), and 189 to 209 (IATLTFIVLALLTILEIAVAM).

This sequence belongs to the ATPase A chain family. Component of the ATP synthase complex composed at least of ATP5F1A/subunit alpha, ATP5F1B/subunit beta, ATP5MC1/subunit c (homooctomer), MT-ATP6/subunit a, MT-ATP8/subunit 8, ATP5ME/subunit e, ATP5MF/subunit f, ATP5MG/subunit g, ATP5MK/subunit k, ATP5MJ/subunit j, ATP5F1C/subunit gamma, ATP5F1D/subunit delta, ATP5F1E/subunit epsilon, ATP5PF/subunit F6, ATP5PB/subunit b, ATP5PD/subunit d, ATP5PO/subunit OSCP. ATP synthase complex consists of a soluble F(1) head domain (subunits alpha(3) and beta(3)) - the catalytic core - and a membrane F(0) domain - the membrane proton channel (subunits c, a, 8, e, f, g, k and j). These two domains are linked by a central stalk (subunits gamma, delta, and epsilon) rotating inside the F1 region and a stationary peripheral stalk (subunits F6, b, d, and OSCP). Interacts with DNAJC30; interaction is direct.

Its subcellular location is the mitochondrion inner membrane. It catalyses the reaction H(+)(in) = H(+)(out). Its function is as follows. Subunit a, of the mitochondrial membrane ATP synthase complex (F(1)F(0) ATP synthase or Complex V) that produces ATP from ADP in the presence of a proton gradient across the membrane which is generated by electron transport complexes of the respiratory chain. ATP synthase complex consist of a soluble F(1) head domain - the catalytic core - and a membrane F(1) domain - the membrane proton channel. These two domains are linked by a central stalk rotating inside the F(1) region and a stationary peripheral stalk. During catalysis, ATP synthesis in the catalytic domain of F(1) is coupled via a rotary mechanism of the central stalk subunits to proton translocation. With the subunit c (ATP5MC1), forms the proton-conducting channel in the F(0) domain, that contains two crucial half-channels (inlet and outlet) that facilitate proton movement from the mitochondrial intermembrane space (IMS) into the matrix. Protons are taken up via the inlet half-channel and released through the outlet half-channel, following a Grotthuss mechanism. The chain is ATP synthase F(0) complex subunit a from Polypterus ornatipinnis (Ornate bichir).